Reading from the N-terminus, the 451-residue chain is V-type proton ATPase subunit S1 (451 aa).

Positions 1–16 are cleaved as a signal peptide; sequence MRVLFAVFSLIMACQA. Over 17–407 the chain is Lumenal; the sequence is YDAVLFSNSR…DCTGTFSSGS (391 aa). N191, N235, N249, and N330 each carry an N-linked (GlcNAc...) asparagine glycan. The chain crosses the membrane as a helical span at residues 408-428; the sequence is WMGIVSALVLIAGLMFGYVML. Residues 429–451 are Cytoplasmic-facing; sequence QSVQTMDRFDDPKQRQIVINVRE.

This sequence belongs to the vacuolar ATPase subunit S1 family. In terms of assembly, accessory component of the multisubunit proton-transporting vacuolar (V)-ATPase protein pump. As to expression, expressed in pharynx, hypodermis, intestine, vulval hypodermis and the H-shape excretory cell.

It is found in the membrane. In terms of biological role, accessory subunit of the proton-transporting vacuolar (V)-ATPase protein pump, which is required for luminal acidification of secretory vesicles. In the germline, required for the trafficking of the receptor RME-2 to the oocyte cell membrane where it regulates the uptake of yolk proteins. Also, plays an essential role in osmoregulation in the embryo, probably by regulating the proper formation of the eggshell. This chain is V-type proton ATPase subunit S1, found in Caenorhabditis elegans.